A 649-amino-acid polypeptide reads, in one-letter code: tRNA-guanine(15) transglycosylase (649 aa).

The Nucleophile role is filled by Asp88. Substrate is bound by residues Asp123 and Ala194. Zn(2+) contacts are provided by Cys280, Cys282, and Cys285. In terms of domain architecture, PUA spans 573 to 648 (KYRIVIDSSV…VAATLRGGLK (76 aa)).

The protein belongs to the archaeosine tRNA-ribosyltransferase family. It depends on Zn(2+) as a cofactor.

The enzyme catalyses guanosine(15) in tRNA + 7-cyano-7-deazaguanine = 7-cyano-7-carbaguanosine(15) in tRNA + guanine. It participates in tRNA modification; archaeosine-tRNA biosynthesis. Functionally, exchanges the guanine residue with 7-cyano-7-deazaguanine (preQ0) at position 15 in the dihydrouridine loop (D-loop) of archaeal tRNAs. In Methanococcus maripaludis (strain DSM 14266 / JCM 13030 / NBRC 101832 / S2 / LL), this protein is tRNA-guanine(15) transglycosylase.